Consider the following 280-residue polypeptide: uncharacterized protein (280 aa).

Disordered regions lie at residues 1-124 (MPRD…QREA) and 177-280 (LEEE…LSSK). Basic residues-rich tracts occupy residues 16 to 36 (SRRR…RSRR) and 48 to 83 (YSRR…RQKS). Composition is skewed to basic and acidic residues over residues 102–124 (AKNR…QREA) and 182–259 (EASL…ERLK).

This is an uncharacterized protein from Arabidopsis thaliana (Mouse-ear cress).